Here is a 724-residue protein sequence, read N- to C-terminus: NAD(+) hydrolase SARM1 (724 aa).

The N-terminal 27 residues, 1–27 (MVLTLLFSAYKLCRFFIMSGPRPGADR), are a transit peptide targeting the mitochondrion. An ARM 1 repeat occupies 60–100 (EVQGALERSLPELQQALSELKQASAAQAVGAGLAEVFQLVE). Residues Trp-103, Arg-110, 149–157 (EQILVAENR), and 190–193 (HMFK) each bind NAD(+). ARM repeat units lie at residues 114-153 (QGLC…QILV), 155-193 (ENRD…HMFK), 196-235 (EETC…NCAL), 237-280 (GGQT…LATN), 281-314 (KEVE…CLVD), 315-354 (ASDT…AEAA), and 359-402 (QGKT…EEVP). SAM domains follow at residues 412-476 (WKEA…LKTF) and 486-548 (NLAD…MLHS). 2 positions are modified to phosphoserine: Ser-548 and Ser-558. Residues 560–703 (DTPDVFISYR…KIIRFLQGRP (144 aa)) enclose the TIR domain. NAD(+)-binding positions include 569–570 (RR) and Glu-599. Glu-642 is an active-site residue. The span at 703 to 717 (PSQDSSAGSDTSLEG) shows a compositional bias: polar residues. Residues 703-724 (PSQDSSAGSDTSLEGATSMGLP) are disordered.

It belongs to the SARM1 family. As to quaternary structure, homooctamer; forms an octameric ring via SAM domains. Interacts with TICAM1/TRIF and thereby interferes with TICAM1/TRIF function. Interacts with MAPK10/JNK3 and SDC2 (via cytoplasmic domain). Post-translationally, phosphorylation at Ser-548 by JNK kinases (MAPK8, MAPK9 and /or MAPK10) enhance the NAD(+) hydrolase (NADase) activity. Phosphorylation at Ser-548 and subsequent activation takes place in response to oxidative stress conditions and inhibits mitochondrial respiration. Phosphorylation at Ser-548 increases in response to cerebral ischemia/reperfusion (I/R) injury.

It is found in the cytoplasm. It localises to the cell projection. The protein localises to the axon. The protein resides in the dendrite. Its subcellular location is the synapse. It is found in the mitochondrion. The catalysed reaction is NAD(+) + H2O = ADP-D-ribose + nicotinamide + H(+). The enzyme catalyses NAD(+) = cyclic ADP-beta-D-ribose + nicotinamide + H(+). It catalyses the reaction NADP(+) + H2O = ADP-D-ribose 2'-phosphate + nicotinamide + H(+). Its activity is regulated as follows. Autoinhibited: in the inactive state, the enzymatic TIR domain is held apart by the autoinhibiting ARM repeats. NAD(+)-binding to ARM repeats maintains an inactive state by promoting interaction between ARM repeats and the TIR domain, thereby facilitating inhibition of the enzymatic TIR domain. Following activation, possibly by nicotinamide mononucleotide (NMN), auto-inhibitory interactions are released, allowing self-association of the TIR domains and subsequent activation of the NAD(+) hydrolase (NADase) activity. Self-association of TIR domains is facilitated by the octamer of SAM domains. In terms of biological role, NAD(+) hydrolase, which plays a key role in axonal degeneration following injury by regulating NAD(+) metabolism. Acts as a negative regulator of MYD88- and TRIF-dependent toll-like receptor signaling pathway by promoting Wallerian degeneration, an injury-induced form of programmed subcellular death which involves degeneration of an axon distal to the injury site. Wallerian degeneration is triggered by NAD(+) depletion: in response to injury, SARM1 is activated and catalyzes cleavage of NAD(+) into ADP-D-ribose (ADPR), cyclic ADPR (cADPR) and nicotinamide; NAD(+) cleavage promoting cytoskeletal degradation and axon destruction. Also able to hydrolyze NADP(+), but not other NAD(+)-related molecules. Can activate neuronal cell death in response to stress. Regulates dendritic arborization through the MAPK4-JNK pathway. Involved in innate immune response: inhibits both TICAM1/TRIF- and MYD88-dependent activation of JUN/AP-1, TRIF-dependent activation of NF-kappa-B and IRF3, and the phosphorylation of MAPK14/p38. The chain is NAD(+) hydrolase SARM1 from Rattus norvegicus (Rat).